A 383-amino-acid chain; its full sequence is Microtubule-associated protein tau (383 aa).

The span at 1 to 27 shows a compositional bias: basic and acidic residues; the sequence is MAEPRQEFDVMEDHAGTYGLGDRKDQE. The disordered stretch occupies residues 1–198; sequence MAEPRQEFDV…PVPMPDLKNV (198 aa). N-acetylalanine is present on Ala2. Residues Tyr18 and Tyr29 each carry the phosphotyrosine modification. Lys44 is covalently cross-linked (Glycyl lysine isopeptide (Lys-Gly) (interchain with G-Cter in ubiquitin)). Thr53 carries the post-translational modification Phosphothreonine. Residues 72–91 are compositionally biased toward basic and acidic residues; it reads KSKDGTGSDDKKAKGADGKT. Thr95 bears the Phosphothreonine mark. At Arg97 the chain carries Omega-N-methylarginine. At Lys105 the chain carries N6,N6-dimethyllysine; alternate. Lys105 carries the N6-acetyllysine; alternate modification. Phosphothreonine is present on residues Thr111, Thr117, and Thr123. Pro residues predominate over residues 116–128; it reads KTPPAPKTPPSSG. Phosphoserine is present on residues Ser127, Ser133, and Ser137. Over residues 129–156 the composition is skewed to low complexity; it reads EPPKSGDRSGYSSPGSPGTPGSRSRTPS. The residue at position 139 (Tyr139) is a Phosphotyrosine. Phosphoserine occurs at positions 140, 141, and 144. Residues Thr147 and Thr154 each carry the phosphothreonine modification. Ser156 carries the phosphoserine modification. Phosphothreonine is present on Thr159. At Lys167 the chain carries N6-acetyllysine. Thr173 carries the phosphothreonine modification. Phosphoserine is present on residues Ser177 and Ser179. Tau/MAP repeat units lie at residues 186-216, 217-247, 248-278, and 279-310; these read QTAP…GGGK, VQII…GGGS, VQIV…GGGQ, and VEVK…GGGN. Lys196 is covalently cross-linked (Glycyl lysine isopeptide (Lys-Gly) (interchain with G-Cter in ubiquitin)). An N6-acetyllysine; alternate modification is found at Lys201. Residue Lys201 is modified to N6-methyllysine; alternate. Lys201 participates in a covalent cross-link: Glycyl lysine isopeptide (Lys-Gly) (interchain with G-Cter in ubiquitin); alternate. Ser204 bears the Phosphoserine mark. Lys209 participates in a covalent cross-link: Glycyl lysine isopeptide (Lys-Gly) (interchain with G-Cter in ubiquitin). An N6-acetyllysine; alternate modification is found at Lys223. Lys223 participates in a covalent cross-link: Glycyl lysine isopeptide (Lys-Gly) (interchain with G-Cter in ubiquitin); alternate. Phosphoserine is present on residues Ser227 and Ser231. The residue at position 232 (Lys232) is an N6-acetyllysine. Cys233 and Cys264 form a disulfide bridge. A Phosphoserine modification is found at Ser235. At Lys240 the chain carries N6-acetyllysine; alternate. A Glycyl lysine isopeptide (Lys-Gly) (interchain with G-Cter in ubiquitin); alternate cross-link involves residue Lys240. Ser247 carries the phosphoserine modification. Lys253 bears the N6,N6-dimethyllysine; alternate mark. N6-acetyllysine; alternate is present on residues Lys253, Lys259, and Lys263. Residues Lys253, Lys259, and Lys263 each participate in a glycyl lysine isopeptide (Lys-Gly) (interchain with G-Cter in ubiquitin); alternate cross-link. Ser266 bears the Phosphoserine mark. Lys273, Lys285, and Lys289 each carry N6-acetyllysine; alternate. Residues Lys273, Lys285, and Lys289 each participate in a glycyl lysine isopeptide (Lys-Gly) (interchain with G-Cter in ubiquitin); alternate cross-link. An Omega-N-methylarginine modification is found at Arg291. Position 294 is a phosphoserine (Ser294). Lys295 is covalently cross-linked (Glycyl lysine isopeptide (Lys-Gly) (interchain with G-Cter in ubiquitin)). Ser298 carries the phosphoserine modification. An N6-acetyllysine; alternate modification is found at Lys311. A Glycyl lysine isopeptide (Lys-Gly) (interchain with G-Cter in ubiquitin); alternate cross-link involves residue Lys311. Lys317 is covalently cross-linked (Glycyl lysine isopeptide (Lys-Gly) (interchain with G-Cter in ubiquitin)). Lys327 bears the N6-acetyllysine; alternate mark. Lys327 is covalently cross-linked (Glycyl lysine isopeptide (Lys-Gly) (interchain with G-Cter in ubiquitin); alternate). Tyr336 is subject to Phosphotyrosine. Phosphoserine is present on residues Ser338 and Ser342. The interval 340-359 is disordered; it reads VVSGDTSPRHLSNVSSTGSI. Over residues 343–358 the composition is skewed to polar residues; the sequence is GDTSPRHLSNVSSTGS. Thr345 carries the phosphothreonine modification. Ser346, Ser351, Ser358, and Ser364 each carry phosphoserine. Residue Thr369 is modified to Phosphothreonine.

In terms of assembly, interacts with MARK1, MARK2, MARK3 and MARK4. Interacts with SQSTM1 when polyubiquitinated. Interacts with PSMC2 through SQSTM1. Interacts with FKBP4. Binds to CSNK1D. Interacts with SGK1. Interacts with PIN1. Interacts with LRRK2. Interacts with LRP1, leading to endocytosis; this interaction is reduced in the presence of LRPAP1/RAP. Post-translationally, polyubiquitinated. Requires functional TRAF6 and may provoke SQSTM1-dependent degradation by the proteasome. In terms of processing, phosphorylation at various serine and threonine residues in S-P or T-P motifs by proline-directed protein kinases (PDPK1, CDK1, CDK5, GSK3, MAPK) (a few sites per protein in interphase, more in mitosis), and at serine residues in K-X-G-S motifs by MAP/microtubule affinity-regulating kinase (MARK1, MARK2, MARK3 or MARK4), causing detachment from microtubules, and their disassembly. Phosphorylation at Ser-204 by BRSK1 and BRSK2 in neurons affects ability to bind microtubules and plays a role in neuron polarization. Phosphorylated by PHK. Dephosphorylation at several serine and threonine residues by the serine/threonine phosphatase PPP5C. As to expression, expressed in neurons.

It localises to the cytoplasm. The protein resides in the cytosol. Its subcellular location is the cell membrane. It is found in the cytoskeleton. The protein localises to the cell projection. It localises to the axon. The protein resides in the dendrite. Functionally, promotes microtubule assembly and stability, and might be involved in the establishment and maintenance of neuronal polarity. The C-terminus binds axonal microtubules while the N-terminus binds neural plasma membrane components, suggesting that tau functions as a linker protein between both. Axonal polarity is predetermined by tau localization (in the neuronal cell) in the domain of the cell body defined by the centrosome. This chain is Microtubule-associated protein tau (MAPT), found in Papio hamadryas (Hamadryas baboon).